The sequence spans 210 residues: Syntaxin-binding protein 6 (210 aa).

Ser-2 is modified (N-acetylserine). A v-SNARE coiled-coil homology domain is found at Gly-151 to Cys-210.

As to quaternary structure, part of a ternary complex containing SNAP25 and STX1A that can be dissociated by NAPA and NSF. Interacts with STX4A.

It is found in the cytoplasm. It localises to the membrane. Functionally, forms non-fusogenic complexes with SNAP25 and STX1A and may thereby modulate the formation of functional SNARE complexes and exocytosis. The protein is Syntaxin-binding protein 6 (STXBP6) of Bos taurus (Bovine).